A 227-amino-acid chain; its full sequence is ATP-dependent dethiobiotin synthetase BioD (227 aa).

13-18 (DVGKTV) serves as a coordination point for ATP. Thr17 provides a ligand contact to Mg(2+). Lys38 is a catalytic residue. ATP contacts are provided by residues Asp55, 116–119 (EGAG), 176–177 (NR), and 205–207 (PYI). Mg(2+) contacts are provided by Asp55 and Glu116.

The protein belongs to the dethiobiotin synthetase family. As to quaternary structure, homodimer. Mg(2+) serves as cofactor.

Its subcellular location is the cytoplasm. The enzyme catalyses (7R,8S)-7,8-diammoniononanoate + CO2 + ATP = (4R,5S)-dethiobiotin + ADP + phosphate + 3 H(+). It functions in the pathway cofactor biosynthesis; biotin biosynthesis; biotin from 7,8-diaminononanoate: step 1/2. Functionally, catalyzes a mechanistically unusual reaction, the ATP-dependent insertion of CO2 between the N7 and N8 nitrogen atoms of 7,8-diaminopelargonic acid (DAPA, also called 7,8-diammoniononanoate) to form a ureido ring. In Vibrio vulnificus (strain CMCP6), this protein is ATP-dependent dethiobiotin synthetase BioD.